The primary structure comprises 118 residues: Large ribosomal subunit protein bL20 (118 aa).

Belongs to the bacterial ribosomal protein bL20 family.

In terms of biological role, binds directly to 23S ribosomal RNA and is necessary for the in vitro assembly process of the 50S ribosomal subunit. It is not involved in the protein synthesizing functions of that subunit. In Alteromonas mediterranea (strain DSM 17117 / CIP 110805 / LMG 28347 / Deep ecotype), this protein is Large ribosomal subunit protein bL20.